The sequence spans 473 residues: UDP-N-acetylmuramate--L-alanine ligase (473 aa).

112 to 118 (GTHGKTT) serves as a coordination point for ATP.

The protein belongs to the MurCDEF family.

It localises to the cytoplasm. The enzyme catalyses UDP-N-acetyl-alpha-D-muramate + L-alanine + ATP = UDP-N-acetyl-alpha-D-muramoyl-L-alanine + ADP + phosphate + H(+). It functions in the pathway cell wall biogenesis; peptidoglycan biosynthesis. Cell wall formation. The sequence is that of UDP-N-acetylmuramate--L-alanine ligase from Nitrosomonas eutropha (strain DSM 101675 / C91 / Nm57).